We begin with the raw amino-acid sequence, 292 residues long: Glutamate racemase (292 aa).

Residues 28 to 29 (DS) and 60 to 61 (YG) each bind substrate. C91 serves as the catalytic Proton donor/acceptor. Substrate is bound at residue 92-93 (NT). The active-site Proton donor/acceptor is C200. Residue 201-202 (TH) participates in substrate binding.

It belongs to the aspartate/glutamate racemases family.

It catalyses the reaction L-glutamate = D-glutamate. Its pathway is cell wall biogenesis; peptidoglycan biosynthesis. Provides the (R)-glutamate required for cell wall biosynthesis. This is Glutamate racemase from Nostoc sp. (strain PCC 7120 / SAG 25.82 / UTEX 2576).